Consider the following 505-residue polypeptide: N-succinylglutamate 5-semialdehyde dehydrogenase (505 aa).

G234–G239 is a binding site for NAD(+). Catalysis depends on residues E257 and C291.

The protein belongs to the aldehyde dehydrogenase family. AstD subfamily.

The catalysed reaction is N-succinyl-L-glutamate 5-semialdehyde + NAD(+) + H2O = N-succinyl-L-glutamate + NADH + 2 H(+). It functions in the pathway amino-acid degradation; L-arginine degradation via AST pathway; L-glutamate and succinate from L-arginine: step 4/5. Catalyzes the NAD-dependent reduction of succinylglutamate semialdehyde into succinylglutamate. The protein is N-succinylglutamate 5-semialdehyde dehydrogenase of Yersinia pseudotuberculosis serotype IB (strain PB1/+).